Reading from the N-terminus, the 381-residue chain is Queuine tRNA-ribosyltransferase (381 aa).

Residue D92 is the Proton acceptor of the active site. Residues 92 to 96, D146, Q190, and G217 each bind substrate; that span reads DSGGF. Positions 248–254 are RNA binding; that stretch reads GVGRPED. D267 serves as the catalytic Nucleophile. An RNA binding; important for wobble base 34 recognition region spans residues 272 to 276; it reads TRNAR. Zn(2+) is bound by residues C305, C307, C310, and H337.

Belongs to the queuine tRNA-ribosyltransferase family. Homodimer. Within each dimer, one monomer is responsible for RNA recognition and catalysis, while the other monomer binds to the replacement base PreQ1. The cofactor is Zn(2+).

It catalyses the reaction 7-aminomethyl-7-carbaguanine + guanosine(34) in tRNA = 7-aminomethyl-7-carbaguanosine(34) in tRNA + guanine. It participates in tRNA modification; tRNA-queuosine biosynthesis. Catalyzes the base-exchange of a guanine (G) residue with the queuine precursor 7-aminomethyl-7-deazaguanine (PreQ1) at position 34 (anticodon wobble position) in tRNAs with GU(N) anticodons (tRNA-Asp, -Asn, -His and -Tyr). Catalysis occurs through a double-displacement mechanism. The nucleophile active site attacks the C1' of nucleotide 34 to detach the guanine base from the RNA, forming a covalent enzyme-RNA intermediate. The proton acceptor active site deprotonates the incoming PreQ1, allowing a nucleophilic attack on the C1' of the ribose to form the product. After dissociation, two additional enzymatic reactions on the tRNA convert PreQ1 to queuine (Q), resulting in the hypermodified nucleoside queuosine (7-(((4,5-cis-dihydroxy-2-cyclopenten-1-yl)amino)methyl)-7-deazaguanosine). The chain is Queuine tRNA-ribosyltransferase from Xanthomonas axonopodis pv. citri (strain 306).